A 128-amino-acid chain; its full sequence is Large ribosomal subunit protein bL12 (128 aa).

It belongs to the bacterial ribosomal protein bL12 family. In terms of assembly, homodimer. Part of the ribosomal stalk of the 50S ribosomal subunit. Forms a multimeric L10(L12)X complex, where L10 forms an elongated spine to which 2 to 4 L12 dimers bind in a sequential fashion. Binds GTP-bound translation factors.

In terms of biological role, forms part of the ribosomal stalk which helps the ribosome interact with GTP-bound translation factors. Is thus essential for accurate translation. This is Large ribosomal subunit protein bL12 from Aquifex aeolicus (strain VF5).